We begin with the raw amino-acid sequence, 582 residues long: Transcription factor tau subunit sfc6 (582 aa).

A disordered region spans residues 1–97 (MGPKSKEYEN…SAKKQSSKGL (97 aa)). Acidic residues predominate over residues 18–39 (EDNDDDGDFVLENVMSEEDIEI). The segment covering 63 to 87 (QPLTPSSSKGAGNEPKSQNSSTTRG) has biased composition (polar residues). WD repeat units follow at residues 221–262 (TQFL…NFKS), 268–314 (HDWG…VKFH), and 326–369 (FNDS…ECPL).

As to quaternary structure, component of the TFIIIC complex including sfc1, sfc3, sfc4, sfc6 and sfc7. The subunits are organized in two globular domains, tauA and tauB, connected by a proteolysis-sensitive and flexible linker. Interacts with sfc1, sfc3 and sfc4.

It localises to the nucleus. In terms of biological role, TFIIIC mediates tRNA and 5S RNA gene activation by binding to intragenic promoter elements. Upstream of the transcription start site, TFIIIC assembles the initiation complex TFIIIB-TFIIIC-tDNA, which is sufficient for RNA polymerase III recruitment and function. Part of the tauB domain of TFIIIC that binds boxB DNA promoter sites of tRNA and similar genes. Cooperates with sfc3 in DNA binding. Localizes to chromatin insulator sequence without recruiting RNA polymerase III and plays a role in nuclear organization. In Schizosaccharomyces pombe (strain 972 / ATCC 24843) (Fission yeast), this protein is Transcription factor tau subunit sfc6.